The chain runs to 148 residues: UPF0178 protein CA_C2825 (148 aa).

It belongs to the UPF0178 family.

In Clostridium acetobutylicum (strain ATCC 824 / DSM 792 / JCM 1419 / IAM 19013 / LMG 5710 / NBRC 13948 / NRRL B-527 / VKM B-1787 / 2291 / W), this protein is UPF0178 protein CA_C2825.